The following is a 322-amino-acid chain: tRNA-dihydrouridine synthase B (322 aa).

Residues 16–18 (PMA) and Gln70 each bind FMN. Catalysis depends on Cys100, which acts as the Proton donor. FMN-binding positions include Lys139, 200-202 (NGD), and 224-225 (GR).

This sequence belongs to the Dus family. DusB subfamily. Requires FMN as cofactor.

It carries out the reaction a 5,6-dihydrouridine in tRNA + NAD(+) = a uridine in tRNA + NADH + H(+). The catalysed reaction is a 5,6-dihydrouridine in tRNA + NADP(+) = a uridine in tRNA + NADPH + H(+). Its function is as follows. Catalyzes the synthesis of 5,6-dihydrouridine (D), a modified base found in the D-loop of most tRNAs, via the reduction of the C5-C6 double bond in target uridines. The sequence is that of tRNA-dihydrouridine synthase B from Vibrio parahaemolyticus serotype O3:K6 (strain RIMD 2210633).